Reading from the N-terminus, the 49-residue chain is Light-harvesting protein B-875 beta chain (49 aa).

The Cytoplasmic portion of the chain corresponds to A2 to G27. A bacteriochlorophyll-binding residues include H21 and H39. The chain crosses the membrane as a helical; Signal-anchor for type II membrane protein span at residues L28–W45. At R46 to F49 the chain is on the periplasmic side.

This sequence belongs to the antenna complex beta subunit family. The core complex is formed by different alpha and beta chains, binding bacteriochlorophyll molecules, and arranged most probably in tetrameric structures disposed around the reaction center. The non-pigmented gamma chains may constitute additional components.

The protein resides in the cell inner membrane. Functionally, antenna complexes are light-harvesting systems, which transfer the excitation energy to the reaction centers. The sequence is that of Light-harvesting protein B-875 beta chain (pufB) from Cereibacter sphaeroides (strain ATCC 17023 / DSM 158 / JCM 6121 / CCUG 31486 / LMG 2827 / NBRC 12203 / NCIMB 8253 / ATH 2.4.1.) (Rhodobacter sphaeroides).